Here is a 59-residue protein sequence, read N- to C-terminus: Large ribosomal subunit protein uL30 (59 aa).

Belongs to the universal ribosomal protein uL30 family. Part of the 50S ribosomal subunit.

The protein is Large ribosomal subunit protein uL30 of Psychrobacter arcticus (strain DSM 17307 / VKM B-2377 / 273-4).